The sequence spans 472 residues: 3-isopropylmalate dehydratase large subunit (472 aa).

[4Fe-4S] cluster contacts are provided by Cys353, Cys414, and Cys417.

This sequence belongs to the aconitase/IPM isomerase family. LeuC type 1 subfamily. In terms of assembly, heterodimer of LeuC and LeuD. The cofactor is [4Fe-4S] cluster.

The enzyme catalyses (2R,3S)-3-isopropylmalate = (2S)-2-isopropylmalate. It participates in amino-acid biosynthesis; L-leucine biosynthesis; L-leucine from 3-methyl-2-oxobutanoate: step 2/4. Catalyzes the isomerization between 2-isopropylmalate and 3-isopropylmalate, via the formation of 2-isopropylmaleate. The protein is 3-isopropylmalate dehydratase large subunit of Acinetobacter baumannii (strain ATCC 17978 / DSM 105126 / CIP 53.77 / LMG 1025 / NCDC KC755 / 5377).